Reading from the N-terminus, the 398-residue chain is 2-amino-3-ketobutyrate coenzyme A ligase (398 aa).

A pyridoxal 5'-phosphate-binding site is contributed by 111–112 (CF). H136 provides a ligand contact to substrate. Residues S185, 210 to 213 (DDSH), 241 to 244 (TLGK), and 274 to 275 (SN) contribute to the pyridoxal 5'-phosphate site. K244 bears the N6-(pyridoxal phosphate)lysine mark. R368 serves as a coordination point for substrate.

Belongs to the class-II pyridoxal-phosphate-dependent aminotransferase family. Homodimer. The cofactor is pyridoxal 5'-phosphate.

It carries out the reaction glycine + acetyl-CoA = (2S)-2-amino-3-oxobutanoate + CoA. Its pathway is amino-acid degradation; L-threonine degradation via oxydo-reductase pathway; glycine from L-threonine: step 2/2. Its function is as follows. Catalyzes the cleavage of 2-amino-3-ketobutyrate to glycine and acetyl-CoA. This chain is 2-amino-3-ketobutyrate coenzyme A ligase, found in Salmonella typhimurium (strain LT2 / SGSC1412 / ATCC 700720).